A 293-amino-acid polypeptide reads, in one-letter code: ATP synthase gamma chain (293 aa).

It belongs to the ATPase gamma chain family. In terms of assembly, F-type ATPases have 2 components, CF(1) - the catalytic core - and CF(0) - the membrane proton channel. CF(1) has five subunits: alpha(3), beta(3), gamma(1), delta(1), epsilon(1). CF(0) has three main subunits: a, b and c.

Its subcellular location is the cell membrane. Its function is as follows. Produces ATP from ADP in the presence of a proton gradient across the membrane. The gamma chain is believed to be important in regulating ATPase activity and the flow of protons through the CF(0) complex. In Streptococcus gordonii (strain Challis / ATCC 35105 / BCRC 15272 / CH1 / DL1 / V288), this protein is ATP synthase gamma chain.